The sequence spans 138 residues: Transcription antitermination protein NusB (138 aa).

Belongs to the NusB family.

Functionally, involved in transcription antitermination. Required for transcription of ribosomal RNA (rRNA) genes. Binds specifically to the boxA antiterminator sequence of the ribosomal RNA (rrn) operons. The polypeptide is Transcription antitermination protein NusB (Helicobacter pylori (strain G27)).